The following is a 379-amino-acid chain: Acetylornithine aminotransferase (379 aa).

Residues G93–A94 and F120 each bind pyridoxal 5'-phosphate. Residue R123 coordinates N(2)-acetyl-L-ornithine. D205 to Q208 serves as a coordination point for pyridoxal 5'-phosphate. K234 bears the N6-(pyridoxal phosphate)lysine mark. N(2)-acetyl-L-ornithine is bound at residue S262. T263 contacts pyridoxal 5'-phosphate.

The protein belongs to the class-III pyridoxal-phosphate-dependent aminotransferase family. ArgD subfamily. Homodimer. Pyridoxal 5'-phosphate serves as cofactor.

The protein localises to the cytoplasm. The catalysed reaction is N(2)-acetyl-L-ornithine + 2-oxoglutarate = N-acetyl-L-glutamate 5-semialdehyde + L-glutamate. It participates in amino-acid biosynthesis; L-arginine biosynthesis; N(2)-acetyl-L-ornithine from L-glutamate: step 4/4. This Streptococcus mutans serotype c (strain ATCC 700610 / UA159) protein is Acetylornithine aminotransferase.